We begin with the raw amino-acid sequence, 82 residues long: MNPIVSAASVVASGLSVGLAAIGPGIGQGTAAAQAVEGIARQPEAEGRIRGTLLLSLAFMESLTIYGLVVALALLFANPFTS.

The next 2 membrane-spanning stretches (helical) occupy residues alanine 7–glycine 27 and leucine 57–alanine 77.

The protein belongs to the ATPase C chain family. As to quaternary structure, F-type ATPases have 2 components, F(1) - the catalytic core - and F(0) - the membrane proton channel. F(1) has five subunits: alpha(3), beta(3), gamma(1), delta(1), epsilon(1). F(0) has four main subunits: a(1), b(1), b'(1) and c(10-14). The alpha and beta chains form an alternating ring which encloses part of the gamma chain. F(1) is attached to F(0) by a central stalk formed by the gamma and epsilon chains, while a peripheral stalk is formed by the delta, b and b' chains.

The protein localises to the plastid. Its subcellular location is the chloroplast thylakoid membrane. Its function is as follows. F(1)F(0) ATP synthase produces ATP from ADP in the presence of a proton or sodium gradient. F-type ATPases consist of two structural domains, F(1) containing the extramembraneous catalytic core and F(0) containing the membrane proton channel, linked together by a central stalk and a peripheral stalk. During catalysis, ATP synthesis in the catalytic domain of F(1) is coupled via a rotary mechanism of the central stalk subunits to proton translocation. Functionally, key component of the F(0) channel; it plays a direct role in translocation across the membrane. A homomeric c-ring of between 10-14 subunits forms the central stalk rotor element with the F(1) delta and epsilon subunits. The chain is ATP synthase subunit c, chloroplastic from Guillardia theta (Cryptophyte).